The following is a 382-amino-acid chain: MGSGEPNPAGKKKKYLKAALYVGDLDPDVTEDMLYKKFRPAGPLRFTRICRDPVTRSPLGYGYVNFRFPADAEWALNTMNFDLINGKPFRLMWSQPDDRLRKSGVGNIFIKNLDKSIDNRALFYLFSAFGNILSCKVVCDDNGSKGYAYVHFDSLAAANRAIWHMNGVRLNNRQVYVGRFKFPEERAAEVRTRDRATFTNVFVKNIGDDIDDEKLKELFCEYGPTESVKVIRDASGKSKGFGFVRYETHEAAQKAVLDLHGKSIDGKVLYVGRAQKKIERLAELRRRFERLRLKEKSRPPGVPIYIKNLDETINDEKLKEEFSSFGSISRAKVMMEVGQGKGFGVVCFSSFEEATKAVDEMNGRIVGSKPLHVTLGQARRRC.

4 RRM domains span residues 18-96, 106-182, 199-276, and 302-378; these read AALY…WSQP, GNIF…RFKF, TNVF…RAQK, and VPIY…LGQA.

Its subcellular location is the cytoplasm. Functionally, binds the poly(A) tail of mRNA. May be involved in cytoplasmic regulatory processes of mRNA metabolism. Can probably bind to cytoplasmic RNA sequences other than poly(A) in vivo. This chain is Polyadenylate-binding protein 5 (PABPC5), found in Gorilla gorilla gorilla (Western lowland gorilla).